We begin with the raw amino-acid sequence, 795 residues long: Lon protease 1 (795 aa).

A Lon N-terminal domain is found at 9–204; sequence LPVLPLRNTV…RVLALLLRDL (196 aa). 360–367 lines the ATP pocket; that stretch reads GPPGVGKT. In terms of domain architecture, Lon proteolytic spans 596–777; it reads EPQVGAAQGL…GEVLKLLLLP (182 aa). Residues Ser683 and Lys726 contribute to the active site.

This sequence belongs to the peptidase S16 family. Homohexamer. Organized in a ring with a central cavity.

It localises to the cytoplasm. The catalysed reaction is Hydrolysis of proteins in presence of ATP.. ATP-dependent serine protease that mediates the selective degradation of mutant and abnormal proteins as well as certain short-lived regulatory proteins. Required for cellular homeostasis and for survival from DNA damage and developmental changes induced by stress. Degrades polypeptides processively to yield small peptide fragments that are 5 to 10 amino acids long. Binds to DNA in a double-stranded, site-specific manner. In Thermus thermophilus (strain ATCC BAA-163 / DSM 7039 / HB27), this protein is Lon protease 1.